We begin with the raw amino-acid sequence, 247 residues long: CDP-diacylglycerol pyrophosphatase (247 aa).

The helical transmembrane segment at 5–22 (IVLALVVSVAVAGGWLWM) threads the bilayer.

This sequence belongs to the Cdh family.

Its subcellular location is the cell inner membrane. It carries out the reaction a CDP-1,2-diacyl-sn-glycerol + H2O = a 1,2-diacyl-sn-glycero-3-phosphate + CMP + 2 H(+). It participates in phospholipid metabolism; CDP-diacylglycerol degradation; phosphatidate from CDP-diacylglycerol: step 1/1. The chain is CDP-diacylglycerol pyrophosphatase from Enterobacter sp. (strain 638).